The chain runs to 267 residues: L-aspartate dehydrogenase (267 aa).

NAD(+) is bound by residues A124 and N190. Residue H220 is part of the active site.

Belongs to the L-aspartate dehydrogenase family.

It carries out the reaction L-aspartate + NADP(+) + H2O = oxaloacetate + NH4(+) + NADPH + H(+). The catalysed reaction is L-aspartate + NAD(+) + H2O = oxaloacetate + NH4(+) + NADH + H(+). Its pathway is cofactor biosynthesis; NAD(+) biosynthesis; iminoaspartate from L-aspartate (dehydrogenase route): step 1/1. Specifically catalyzes the NAD or NADP-dependent dehydrogenation of L-aspartate to iminoaspartate. The sequence is that of L-aspartate dehydrogenase from Ralstonia pickettii (strain 12J).